The following is a 757-amino-acid chain: Catalase-peroxidase (757 aa).

The tryptophyl-tyrosyl-methioninium (Trp-Tyr) (with M-274) cross-link spans 101–248; it reads WHSAGTYRIG…LAAVQMGLIY (148 aa). Histidine 102 serves as the catalytic Proton acceptor. The segment at 210–231 is disordered; the sequence is SEGVHHPDEHSGAKEKASKNSD. Residues 212-231 are compositionally biased toward basic and acidic residues; the sequence is GVHHPDEHSGAKEKASKNSD. Residues 248-274 constitute a cross-link (tryptophyl-tyrosyl-methioninium (Tyr-Met) (with W-101)); sequence YVNPEGPDGRPDPLASARDIRETFARM. Histidine 289 serves as a coordination point for heme b. A disordered region spans residues 293–312; that stretch reads KTHGAAPADNVGPEPEAGEL.

The protein belongs to the peroxidase family. Peroxidase/catalase subfamily. Homodimer or homotetramer. Heme b is required as a cofactor. Post-translationally, formation of the three residue Trp-Tyr-Met cross-link is important for the catalase, but not the peroxidase activity of the enzyme.

It catalyses the reaction H2O2 + AH2 = A + 2 H2O. The catalysed reaction is 2 H2O2 = O2 + 2 H2O. Functionally, bifunctional enzyme with both catalase and broad-spectrum peroxidase activity. In Xylella fastidiosa (strain M12), this protein is Catalase-peroxidase.